The primary structure comprises 91 residues: MTEQQILDKVQSIVSEQLGVERSQISPNASFTHDLGADSLDNVELVMAMEEEFDLEIPDSAAEQITTIQQAVDYILQHKKSLSQNNLSQNN.

The 76-residue stretch at 4 to 79 (QQILDKVQSI…QAVDYILQHK (76 aa)) folds into the Carrier domain. Ser-39 is subject to O-(pantetheine 4'-phosphoryl)serine.

This sequence belongs to the acyl carrier protein (ACP) family. In terms of processing, 4'-phosphopantetheine is transferred from CoA to a specific serine of apo-ACP by AcpS. This modification is essential for activity because fatty acids are bound in thioester linkage to the sulfhydryl of the prosthetic group.

The protein localises to the plastid. The protein resides in the chloroplast. It participates in lipid metabolism; fatty acid biosynthesis. Functionally, carrier of the growing fatty acid chain in fatty acid biosynthesis. This chain is Acyl carrier protein, found in Cyanidioschyzon merolae (strain NIES-3377 / 10D) (Unicellular red alga).